We begin with the raw amino-acid sequence, 389 residues long: Na(+)/H(+) antiporter NhaA 1 (389 aa).

11 consecutive transmembrane segments (helical) span residues valine 12–valine 32, phenylalanine 62–leucine 82, isoleucine 97–leucine 117, glycine 128–glycine 148, isoleucine 157–phenylalanine 177, isoleucine 184–glycine 204, isoleucine 220–isoleucine 240, phenylalanine 260–serine 280, isoleucine 282–glycine 302, leucine 331–leucine 351, and leucine 365–phenylalanine 385.

The protein belongs to the NhaA Na(+)/H(+) (TC 2.A.33) antiporter family.

The protein resides in the cell inner membrane. It catalyses the reaction Na(+)(in) + 2 H(+)(out) = Na(+)(out) + 2 H(+)(in). Na(+)/H(+) antiporter that extrudes sodium in exchange for external protons. This is Na(+)/H(+) antiporter NhaA 1 from Campylobacter jejuni (strain RM1221).